A 1120-amino-acid chain; its full sequence is Vacuolar cation-chloride cotransporter 1 (1120 aa).

A disordered region spans residues 1 to 21 (MVSRFYQIPGTHRPSSAISSS). At 1–62 (MVSRFYQIPG…YDPDNPNKDK (62 aa)) the chain is on the cytoplasmic side. S34 is subject to Phosphoserine. Residues 63 to 83 (LGTYDGVFVPTALNVLSILMF) form a helical membrane-spanning segment. Residues 84–85 (LR) are Vacuolar-facing. The helical transmembrane segment at 86–106 (FGFILGQLGIICTIGLLLLSY) threads the bilayer. The Cytoplasmic segment spans residues 107-145 (TINLLTTLSISAISTNGTVRGGGAYYMISRSLGPEFGGS). Residues 146 to 166 (IGLVFFLGQVFNAGMNAVGII) form a helical membrane-spanning segment. Residues 167-193 (EPLLYNLGYSAQGEPPAALGELLPRGH) are Vacuolar-facing. Residues 194 to 214 (WHEFTYATVILFLCFSVAFVG) form a helical membrane-spanning segment. Residues 215-221 (SQTVSRA) lie on the Cytoplasmic side of the membrane. A helical transmembrane segment spans residues 222-242 (GNILFLVLAASIFSIPLSALI). The Vacuolar segment spans residues 243–283 (RSPFTEGGISYTGPSWQTFHDNLLPHLTKGAAGSLLKGKET). A helical membrane pass occupies residues 284–304 (FNDLFGVFFPATAGIFAGAGM). At 305–317 (SSELRKPSKSIPK) the chain is on the cytoplasmic side. The helical transmembrane segment at 318–338 (GTLWGLLFTFICYAVVVFSMG) threads the bilayer. Residues 339-360 (CSIPRRSLYDEVQIIQTISSVQ) are Vacuolar-facing. Residues 361–381 (WVIFMGEMATSLFSIIVGMLG) traverse the membrane as a helical segment. The Cytoplasmic portion of the chain corresponds to 382–393 (AAYVLEAIAKDN). The helical transmembrane segment at 394-414 (IIPGLEIFAHSPLYSLIFTWI) threads the bilayer. The Vacuolar portion of the chain corresponds to 415-430 (LTQLCLFSDVNKIATF). Residues 431–451 (ITMTFLMTFVVMNLACFLLGI) traverse the membrane as a helical segment. Residues 452–462 (SSAPNFRPSFK) lie on the Cytoplasmic side of the membrane. The chain crosses the membrane as a helical span at residues 463–482 (YFNRYTTAIGALLSVVAMLI). The Vacuolar portion of the chain corresponds to 483–487 (VDGIS). A helical membrane pass occupies residues 488 to 506 (ASVLFLAMILLFLFIHYFS). Topologically, residues 507-1120 (PPKSWGDVSQ…SQTMTVTTAL (614 aa)) are cytoplasmic. Phosphoserine occurs at positions 654, 915, and 918.

This sequence belongs to the SLC12A transporter family.

The protein localises to the vacuole membrane. Its function is as follows. Catalyzes the coordinated symport of chloride with potassium ions across the vacuolar membrane. Involved in vacuolar osmoregulation. The protein is Vacuolar cation-chloride cotransporter 1 of Saccharomyces cerevisiae (strain ATCC 204508 / S288c) (Baker's yeast).